A 493-amino-acid chain; its full sequence is Glycogen synthase 1 (493 aa).

Lysine 15 contacts ADP-alpha-D-glucose.

This sequence belongs to the glycosyltransferase 1 family. Bacterial/plant glycogen synthase subfamily.

The enzyme catalyses [(1-&gt;4)-alpha-D-glucosyl](n) + ADP-alpha-D-glucose = [(1-&gt;4)-alpha-D-glucosyl](n+1) + ADP + H(+). The protein operates within glycan biosynthesis; glycogen biosynthesis. Its function is as follows. Synthesizes alpha-1,4-glucan chains using ADP-glucose. In Methylococcus capsulatus (strain ATCC 33009 / NCIMB 11132 / Bath), this protein is Glycogen synthase 1.